The primary structure comprises 749 residues: Protein SWAP (749 aa).

The dry CEEERYL stretch occupies residues 8-124 (SNVHVQEYKD…RNDQRNAIGF (117 aa)). Basic and acidic residues predominate over residues 105-118 (EQEKEEEEKRRNDQ). A disordered region spans residues 105 to 149 (EQEKEEEEKRRNDQRNAIGFDYGTGKVKARESDSEDEPFEPPEGI). One copy of the SURP motif 1 repeat lies at 166-209 (IIEKTASFIVANGTQMEIVIKAKQRNNAEQFGFLEFDHRLNPFY). Residues 256 to 310 (HGSDSEDSDSDYELHPSLLSGGAKRPVTPEKPGAIGPRKKPVEPEKPPDFTLKPV) form a disordered region. An SURP motif 2 repeat occupies 391 to 431 (ILNSYAEHVAQRGLEAEASLAAREDLQLHFMEPKSPYYSYY). Positions 458-478 (PAPPSAVSSPGPSSLMSLNLS) are enriched in low complexity. Disordered regions lie at residues 458-498 (PAPP…SSRL), 537-592 (LRND…QVDR), and 608-749 (KAKK…DRRR). Over residues 538–552 (RNDEPRDESSFRFDP) the composition is skewed to basic and acidic residues. Over residues 560 to 569 (PSDTTANFSD) the composition is skewed to polar residues. The segment covering 574–583 (FPPPTPPVIP) has biased composition (pro residues). Basic and acidic residues-rich tracts occupy residues 608–659 (KAKK…RSLD) and 679–689 (EEMKRTDEDRE). 2 stretches are compositionally biased toward basic residues: residues 690-704 (RKRH…RRSR) and 714-749 (EHKK…DRRR).

It is a regulator of pre-mRNA splicing (and, possibly, of other RNA processing events). It may regulate its own expression at the level of RNA processing. The sequence is that of Protein SWAP (swp-1) from Caenorhabditis elegans.